A 566-amino-acid polypeptide reads, in one-letter code: MIVKRPVSASLARAFFYIVLLSILSTGIALLTLASSLRDAEAINIAGSLRMQSYRLGYDLQSGSPQLNAHRQLFQQALHSPVLTNLNVWYVPEAVKTRYAHLNANWLEMNNRLSKGDLPWYQANINNYVNQIDLFVLALQHYAERKMLLVVAISLAGGIGIFTLVFFTLRRIRHQVVAPLNQLVTASQRIEHGQFDSPPLDTNLPNELGLLAKTFNQMSSELHKLYRSLEASVEEKTRDLHEAKRRLEVLYQCSQALNTSQIDVHCFRHILQIVRDNEAAEYLELNVGENWRISEGQPNPELPMQILPVTMQETVYGELHWQNSHVSSSEPLLNSVSSMLGRGLYFNQAQKHFQQLLLMEERATIARELHDSLAQVLSYLRIQLTLLKRSIPEDNATAQSIMADFSQALNDAYRQLRELLTTFRLTLQQADLPSALREMLDTLQNQTSAKLTLDCRLPTLALDAQMQVHLLQIIREAVLNAMKHANASEIAVSCVTAPDGNHTVYIRDNGIGIGEPKEPEGHYGLNIMRERAERLGGTLTFSQPSGGGTLVSISFRSAEGEESQLM.

Residues 1–13 (MIVKRPVSASLAR) are Cytoplasmic-facing. Residues 14-34 (AFFYIVLLSILSTGIALLTLA) form a helical membrane-spanning segment. The Periplasmic portion of the chain corresponds to 35 to 146 (SSLRDAEAIN…LALQHYAERK (112 aa)). Residues 147 to 167 (MLLVVAISLAGGIGIFTLVFF) form a helical membrane-spanning segment. The Cytoplasmic portion of the chain corresponds to 168 to 566 (TLRRIRHQVV…SAEGEESQLM (399 aa)). In terms of domain architecture, HAMP spans 174 to 227 (HQVVAPLNQLVTASQRIEHGQFDSPPLDTNLPNELGLLAKTFNQMSSELHKLYR). The Histidine kinase domain maps to 364-559 (TIARELHDSL…LVSISFRSAE (196 aa)). The residue at position 370 (His-370) is a Phosphohistidine; by autocatalysis.

It localises to the cell inner membrane. The enzyme catalyses ATP + protein L-histidine = ADP + protein N-phospho-L-histidine.. In terms of biological role, acts as a sensor for nitrate/nitrite and transduces signal of nitrate/nitrite availability to the NarL/NarP proteins. NarQ probably activates NarL and NarP by phosphorylation. NarQ probably negatively regulates the NarL protein by dephosphorylation. This chain is Nitrate/nitrite sensor protein NarQ (narQ), found in Escherichia coli (strain K12).